A 194-amino-acid polypeptide reads, in one-letter code: Imidazoleglycerol-phosphate dehydratase (194 aa).

It belongs to the imidazoleglycerol-phosphate dehydratase family.

The protein localises to the cytoplasm. It catalyses the reaction D-erythro-1-(imidazol-4-yl)glycerol 3-phosphate = 3-(imidazol-4-yl)-2-oxopropyl phosphate + H2O. Its pathway is amino-acid biosynthesis; L-histidine biosynthesis; L-histidine from 5-phospho-alpha-D-ribose 1-diphosphate: step 6/9. In Bacillus anthracis (strain A0248), this protein is Imidazoleglycerol-phosphate dehydratase.